The primary structure comprises 179 residues: Translation initiation factor IF-3 (179 aa).

It belongs to the IF-3 family. In terms of assembly, monomer.

It is found in the cytoplasm. IF-3 binds to the 30S ribosomal subunit and shifts the equilibrium between 70S ribosomes and their 50S and 30S subunits in favor of the free subunits, thus enhancing the availability of 30S subunits on which protein synthesis initiation begins. This chain is Translation initiation factor IF-3, found in Lactococcus lactis subsp. lactis (strain IL1403) (Streptococcus lactis).